Here is a 462-residue protein sequence, read N- to C-terminus: Tubulin gamma-1 chain (462 aa).

142–148 is a GTP binding site; the sequence is AGGTGSG.

Belongs to the tubulin family.

It localises to the cytoplasm. The protein resides in the cytoskeleton. The protein localises to the microtubule organizing center. Its subcellular location is the centrosome. In terms of biological role, tubulin is the major constituent of microtubules. The gamma chain is found at microtubule organizing centers (MTOC) such as the spindle poles or the centrosome, suggesting that it is involved in the minus-end nucleation of microtubule assembly. This chain is Tubulin gamma-1 chain, found in Euplotes crassus.